Here is a 279-residue protein sequence, read N- to C-terminus: Histone chaperone ASF1 (279 aa).

The segment at 1-143 (MSIVSLLGIK…HIVRNILAEK (143 aa)) is interaction with HIR1. An interaction with histone H3, histone H4, RAD53 and the RF-C complex region spans residues 1 to 155 (MSIVSLLGIK…VTRFNIVWDN (155 aa)). The disordered stretch occupies residues 156 to 279 (ENEGDLYPPE…TPKDAARSTN (124 aa)). The span at 168 to 244 (GVDDEEEEDD…DEEEGEEEVG (77 aa)) shows a compositional bias: acidic residues. Residues 192 to 243 (DDQEDGEGEAEEAAEEEEEEEEKTEDNETNLEEEEEDIENSDGDEEEGEEEV) are a coiled coil. Composition is skewed to basic and acidic residues over residues 245 to 254 (SVDKNEDGND) and 269 to 279 (STPKDAARSTN).

The protein belongs to the ASF1 family. In terms of assembly, interacts with histone H3/H4 heterodimers via both histone H3 and histone H4. Binds with higher affinity to H3/H4 heterodimers where histone H3 has been pre-acetylated on 'Lys-14'. Interacts with RAD53 and this may impair interaction with histones and chromatin assembly; the interaction is reduced upon activation of DNA damage or replication checkpoints which in turn promotes histone binding and chromatin assembly. Interacts with the CAC2 subunit of chromatin assembly factor 1 (CAF-1). Interacts with the HIR1, HIR2, HIR3 and HPC2 subunits of the HIR complex. Interacts with the RFC1, RFC2, RFC3, RFC4 and RFC5 subunits of the replication factor C (RF-C/RFC) complex; which may recruit this protein to DNA. Interacts with the SAS2, SAS4 and SAS5 subunits of the SAS/SAS-I complex. Interacts with the BDF1, BDF2, SPT15, TAF1 and TAF7 subunits of the TFIID complex. Interacts with RTT109 and VPS75; the interaction with RTT109 is direct.

It is found in the nucleus. Histone chaperone that facilitates histone deposition and histone exchange and removal during nucleosome assembly and disassembly. Facilitates histone deposition through both replication-dependent and replication-independent chromatin assembly pathways. Cooperates with chromatin assembly factor 1 (CAF-1) to promote replication-dependent chromatin assembly and with the HIR complex to promote replication-independent chromatin assembly, which may occur during transcription and DNA repair. May be required for the maintenance of a subset of replication elongation factors, including DNA polymerase epsilon, the RFC complex and PCNA, at stalled replication forks. Also required for RTT109-dependent acetylation of histone H3 on 'Lys-9' and 'Lys-56'. Promotion of RTT109-mediated histone H3 'Lys-56' acetylation is dependent on interactions with histone H3 pre-acetylated on 'Lys-14'. This chain is Histone chaperone ASF1, found in Saccharomyces cerevisiae (strain ATCC 204508 / S288c) (Baker's yeast).